The sequence spans 501 residues: Phase 2 flagellin (501 aa).

Belongs to the bacterial flagellin family.

The protein resides in the secreted. The protein localises to the bacterial flagellum. Its function is as follows. Flagellin is the subunit protein which polymerizes to form the filaments of bacterial flagella. This is Phase 2 flagellin (fljB) from Salmonella abortus-equi.